The sequence spans 231 residues: Probable septum site-determining protein MinC (231 aa).

The interval Lys102 to Thr125 is disordered. The segment covering Ala114–Thr123 has biased composition (low complexity).

The protein belongs to the MinC family. Interacts with MinD and FtsZ.

Its function is as follows. Cell division inhibitor that blocks the formation of polar Z ring septums. Rapidly oscillates between the poles of the cell to destabilize FtsZ filaments that have formed before they mature into polar Z rings. Prevents FtsZ polymerization. In Escherichia coli O45:K1 (strain S88 / ExPEC), this protein is Probable septum site-determining protein MinC.